We begin with the raw amino-acid sequence, 348 residues long: Dihydroorotase (348 aa).

Residues histidine 14 and histidine 16 each contribute to the Zn(2+) site. Substrate contacts are provided by residues histidine 16–arginine 18 and asparagine 42. Lysine 100, histidine 137, and histidine 175 together coordinate Zn(2+). At lysine 100 the chain carries N6-carboxylysine. A substrate-binding site is contributed by histidine 137. Leucine 220 contacts substrate. Aspartate 248 is a Zn(2+) binding site. The active site involves aspartate 248. Histidine 252 and alanine 264 together coordinate substrate.

This sequence belongs to the metallo-dependent hydrolases superfamily. DHOase family. Class II DHOase subfamily. As to quaternary structure, homodimer. It depends on Zn(2+) as a cofactor.

It carries out the reaction (S)-dihydroorotate + H2O = N-carbamoyl-L-aspartate + H(+). Its pathway is pyrimidine metabolism; UMP biosynthesis via de novo pathway; (S)-dihydroorotate from bicarbonate: step 3/3. Functionally, catalyzes the reversible cyclization of carbamoyl aspartate to dihydroorotate. The chain is Dihydroorotase from Azotobacter vinelandii (strain DJ / ATCC BAA-1303).